The primary structure comprises 206 residues: Small ribosomal subunit protein uS4 (206 aa).

Residues 96 to 156 enclose the S4 RNA-binding domain; it reads NRLDNVTYRI…KNSKLQSRIK (61 aa).

The protein belongs to the universal ribosomal protein uS4 family. In terms of assembly, part of the 30S ribosomal subunit. Contacts protein S5. The interaction surface between S4 and S5 is involved in control of translational fidelity.

In terms of biological role, one of the primary rRNA binding proteins, it binds directly to 16S rRNA where it nucleates assembly of the body of the 30S subunit. Functionally, with S5 and S12 plays an important role in translational accuracy. This is Small ribosomal subunit protein uS4 from Buchnera aphidicola subsp. Baizongia pistaciae (strain Bp).